The primary structure comprises 137 residues: NADH dehydrogenase [ubiquinone] 1 beta subcomplex subunit 7 (137 aa).

A lipid anchor (N-myristoyl glycine) is attached at G2. Residues 56–98 form the CHCH domain; sequence RDYCAHYLIRFLKCKRDSFPNFLACKHERHDWDYCEHLDYVKR. Positions 59–69 match the Cx9C motif 1 motif; that stretch reads CAHYLIRFLKC. Disulfide bonds link C59/C90 and C69/C80. The residue at position 73 (S73) is a Phosphoserine. The Cx9C motif 2 motif lies at 80-90; the sequence is CKHERHDWDYC. Residues 110-137 are disordered; it reads QRKKRREQREADMAKGLGPGEVAPEVAL.

This sequence belongs to the complex I NDUFB7 subunit family. In terms of assembly, complex I is composed of 45 different subunits.

It localises to the mitochondrion inner membrane. It is found in the mitochondrion intermembrane space. In terms of biological role, accessory subunit of the mitochondrial membrane respiratory chain NADH dehydrogenase (Complex I), that is believed not to be involved in catalysis. Complex I functions in the transfer of electrons from NADH to the respiratory chain. The immediate electron acceptor for the enzyme is believed to be ubiquinone. The sequence is that of NADH dehydrogenase [ubiquinone] 1 beta subcomplex subunit 7 (NDUFB7) from Bos taurus (Bovine).